The chain runs to 637 residues: 1-deoxy-D-xylulose-5-phosphate synthase (637 aa).

Residues His-88 and 129–131 (GHS) contribute to the thiamine diphosphate site. Asp-160 provides a ligand contact to Mg(2+). Thiamine diphosphate is bound by residues 161–162 (GA), Asn-189, Phe-293, and Glu-370. Asn-189 contacts Mg(2+).

This sequence belongs to the transketolase family. DXPS subfamily. As to quaternary structure, homodimer. It depends on Mg(2+) as a cofactor. Thiamine diphosphate serves as cofactor.

The enzyme catalyses D-glyceraldehyde 3-phosphate + pyruvate + H(+) = 1-deoxy-D-xylulose 5-phosphate + CO2. The protein operates within metabolic intermediate biosynthesis; 1-deoxy-D-xylulose 5-phosphate biosynthesis; 1-deoxy-D-xylulose 5-phosphate from D-glyceraldehyde 3-phosphate and pyruvate: step 1/1. In terms of biological role, catalyzes the acyloin condensation reaction between C atoms 2 and 3 of pyruvate and glyceraldehyde 3-phosphate to yield 1-deoxy-D-xylulose-5-phosphate (DXP). The polypeptide is 1-deoxy-D-xylulose-5-phosphate synthase (Acinetobacter baumannii (strain AYE)).